The following is a 74-amino-acid chain: Protein SlyX homolog (74 aa).

The interval 54–74 (QDRNPDAQEPYSLRDEIPPHY) is disordered.

It belongs to the SlyX family.

This chain is Protein SlyX homolog, found in Neisseria gonorrhoeae (strain ATCC 700825 / FA 1090).